Reading from the N-terminus, the 289-residue chain is Secretory carrier-associated membrane protein (289 aa).

Residues 1–65 (MAGRYDPNPF…TSTDGKKKER (65 aa)) are disordered. Topologically, residues 1–123 (MAGRYDPNPF…EIPIHLRTLQ (123 aa)) are cytoplasmic. The span at 16-31 (NPFSNPRSAASATNSR) shows a compositional bias: polar residues. Residues 59-98 (DGKKKERDLQAKEAELRKREQEVRRKEEAIARAGIVIEEK) are a coiled coil. 4 helical membrane-spanning segments follow: residues 124–144 (YVAF…VVSV), 156–176 (IWFL…ALWY), 191–211 (FGWF…AAVA), and 239–259 (IFYF…IWVI). Over 260–289 (QQVYMHFRGGGKTAEMKREAALGAMGAALR) the chain is Cytoplasmic.

It belongs to the SCAMP family.

It localises to the cell membrane. It is found in the cytoplasmic vesicle. Its subcellular location is the secretory vesicle membrane. In terms of biological role, probably involved in membrane trafficking. This Pisum sativum (Garden pea) protein is Secretory carrier-associated membrane protein (PSAM2).